A 558-amino-acid chain; its full sequence is Glucose-6-phosphate isomerase (558 aa).

The residue at position 2 (Ala-2) is an N-acetylalanine. The residue at position 12 (Lys-12) is an N6-acetyllysine. The residue at position 34 (Lys-34) is an N6-(2-hydroxyisobutyryl)lysine. Ser-107 carries the phosphoserine modification. Position 109 is a phosphothreonine (Thr-109). The residue at position 142 (Lys-142) is an N6-acetyllysine. Residue 159-160 participates in D-glucose 6-phosphate binding; that stretch reads GS. The residue at position 185 (Ser-185) is a Phosphoserine; by CK2. 210–215 provides a ligand contact to D-glucose 6-phosphate; that stretch reads SKTFTT. Residue Thr-250 is modified to Phosphothreonine. Residues Gln-354, Glu-358, and His-389 each coordinate D-glucose 6-phosphate. Glu-358 functions as the Proton donor in the catalytic mechanism. The active site involves His-389. At Lys-454 the chain carries N6-acetyllysine; alternate. Lys-454 carries the N6-malonyllysine; alternate modification. Lys-454 is modified (N6-succinyllysine; alternate). Ser-455 is subject to Phosphoserine. Lys-519 provides a ligand contact to D-glucose 6-phosphate. Residue Lys-519 is part of the active site.

The protein belongs to the GPI family. In terms of assembly, homodimer in the catalytically active form, monomer in the secreted form. In terms of processing, phosphorylation at Ser-185 by CK2 has been shown to decrease enzymatic activity and may contribute to secretion by a non-classical secretory pathway. Post-translationally, ISGylated.

Its subcellular location is the cytoplasm. It localises to the secreted. The catalysed reaction is alpha-D-glucose 6-phosphate = beta-D-fructose 6-phosphate. It participates in carbohydrate degradation; glycolysis; D-glyceraldehyde 3-phosphate and glycerone phosphate from D-glucose: step 2/4. In the cytoplasm, catalyzes the conversion of glucose-6-phosphate to fructose-6-phosphate, the second step in glycolysis, and the reverse reaction during gluconeogenesis. Besides it's role as a glycolytic enzyme, also acts as a secreted cytokine: acts as an angiogenic factor (AMF) that stimulates endothelial cell motility. Acts as a neurotrophic factor, neuroleukin, for spinal and sensory neurons. It is secreted by lectin-stimulated T-cells and induces immunoglobulin secretion. In Sus scrofa (Pig), this protein is Glucose-6-phosphate isomerase.